Here is a 346-residue protein sequence, read N- to C-terminus: Uroporphyrinogen decarboxylase (346 aa).

Substrate is bound by residues Arg-21–Arg-25, Phe-40, Asp-71, Tyr-146, Ser-201, and His-316.

The protein belongs to the uroporphyrinogen decarboxylase family. In terms of assembly, homodimer.

It localises to the cytoplasm. The catalysed reaction is uroporphyrinogen III + 4 H(+) = coproporphyrinogen III + 4 CO2. The protein operates within porphyrin-containing compound metabolism; protoporphyrin-IX biosynthesis; coproporphyrinogen-III from 5-aminolevulinate: step 4/4. Its function is as follows. Catalyzes the decarboxylation of four acetate groups of uroporphyrinogen-III to yield coproporphyrinogen-III. In Rickettsia felis (strain ATCC VR-1525 / URRWXCal2) (Rickettsia azadi), this protein is Uroporphyrinogen decarboxylase.